The sequence spans 454 residues: MDRPHLFSEVHFRRNASNPNQINWTRYWIDCLSSVPWNDISVTGFEYLAKKYGLEVFQDSSKPNEVVLSLAGKIILIDITVPINASPKDINVVLAFANASGEQYNNPVAEKLLKDAIYNCNTPLFEKNVKWLATFDHSSPSVQQSCFQYLDSLSSSLNAIYEAELSLLAQEENVIMHGNGKPLSNYEGQLGLRIVYWKLLDKTYSTQIFMDNLSHESLPHLLFGYNLLNSPPILQSSKINWALENTLTPIPTTMELVFDDINLIIPEQGVKPLLDLLHVHDITIPWPVQNYSHMLGLPSKSTVNYKFINKNQAIQLTGFDVSARSLRHVPFHHPKQIRGILAIVRQYLLLQLILENIKSADLAETAASSSLHLSLYFKEHPIVHAQYQEINKLNNSEQIIIVLSVLSDGRLNVDYMSSGGKELSKQQSHVFQKLIQQTCNIGLAIEVFIKKVVN.

Belongs to the Mediator complex subunit 1 family. As to quaternary structure, component of the Mediator complex.

The protein localises to the nucleus. Functionally, component of the Mediator complex, a coactivator involved in the regulated transcription of nearly all RNA polymerase II-dependent genes. Mediator functions as a bridge to convey information from gene-specific regulatory proteins to the basal RNA polymerase II transcription machinery. Mediator is recruited to promoters by direct interactions with regulatory proteins and serves as a scaffold for the assembly of a functional preinitiation complex with RNA polymerase II and the general transcription factors. This is Mediator of RNA polymerase II transcription subunit 1 (med1) from Schizosaccharomyces pombe (strain 972 / ATCC 24843) (Fission yeast).